The chain runs to 364 residues: Histidinol-phosphate aminotransferase (364 aa).

K226 is modified (N6-(pyridoxal phosphate)lysine).

This sequence belongs to the class-II pyridoxal-phosphate-dependent aminotransferase family. Histidinol-phosphate aminotransferase subfamily. Homodimer. It depends on pyridoxal 5'-phosphate as a cofactor.

The catalysed reaction is L-histidinol phosphate + 2-oxoglutarate = 3-(imidazol-4-yl)-2-oxopropyl phosphate + L-glutamate. It participates in amino-acid biosynthesis; L-histidine biosynthesis; L-histidine from 5-phospho-alpha-D-ribose 1-diphosphate: step 7/9. This Campylobacter jejuni subsp. jejuni serotype O:23/36 (strain 81-176) protein is Histidinol-phosphate aminotransferase.